A 397-amino-acid chain; its full sequence is Cysteine desulfurase IscS (397 aa).

Pyridoxal 5'-phosphate contacts are provided by residues 72-73 (GS), Asn-152, Gln-180, and 200-202 (SAH). At Lys-203 the chain carries N6-(pyridoxal phosphate)lysine. Residue Thr-238 coordinates pyridoxal 5'-phosphate. Cys-328 acts as the Cysteine persulfide intermediate in catalysis. [2Fe-2S] cluster is bound at residue Cys-328.

Belongs to the class-V pyridoxal-phosphate-dependent aminotransferase family. NifS/IscS subfamily. Homodimer. Forms a heterotetramer with IscU, interacts with other sulfur acceptors. Requires pyridoxal 5'-phosphate as cofactor.

It is found in the cytoplasm. It carries out the reaction (sulfur carrier)-H + L-cysteine = (sulfur carrier)-SH + L-alanine. The protein operates within cofactor biosynthesis; iron-sulfur cluster biosynthesis. Functionally, master enzyme that delivers sulfur to a number of partners involved in Fe-S cluster assembly, tRNA modification or cofactor biosynthesis. Catalyzes the removal of elemental sulfur atoms from cysteine to produce alanine. Functions as a sulfur delivery protein for Fe-S cluster synthesis onto IscU, an Fe-S scaffold assembly protein, as well as other S acceptor proteins. The protein is Cysteine desulfurase IscS of Clostridium botulinum (strain Kyoto / Type A2).